Reading from the N-terminus, the 165-residue chain is Transcription antitermination protein NusB (165 aa).

Positions 1–20 (MSDVENGGEPRQPSVKPANQ) are disordered.

It belongs to the NusB family.

In terms of biological role, involved in transcription antitermination. Required for transcription of ribosomal RNA (rRNA) genes. Binds specifically to the boxA antiterminator sequence of the ribosomal RNA (rrn) operons. This chain is Transcription antitermination protein NusB, found in Agrobacterium fabrum (strain C58 / ATCC 33970) (Agrobacterium tumefaciens (strain C58)).